The sequence spans 98 residues: Integration host factor subunit beta (98 aa).

The protein belongs to the bacterial histone-like protein family. As to quaternary structure, heterodimer of an alpha and a beta chain.

Functionally, this protein is one of the two subunits of integration host factor, a specific DNA-binding protein that functions in genetic recombination as well as in transcriptional and translational control. This Marinobacter nauticus (strain ATCC 700491 / DSM 11845 / VT8) (Marinobacter aquaeolei) protein is Integration host factor subunit beta.